The primary structure comprises 409 residues: Threonine dehydratase-like protein AKTS1-1 (409 aa).

The segment at 1–21 (MADYLRQVMPENDSDSEALPR) is disordered. Lysine 111 is modified (N6-(pyridoxal phosphate)lysine). Pyridoxal 5'-phosphate is bound by residues asparagine 138, 239 to 243 (GEGSL), and serine 368.

This sequence belongs to the serine/threonine dehydratase family. Requires pyridoxal 5'-phosphate as cofactor.

The protein operates within mycotoxin biosynthesis. In terms of biological role, threonine dehydratase-like protein; part of the gene clusters that mediate the biosynthesis of the host-selective toxins (HSTs) AK-toxins responsible for Japanese pear black spot disease by the Japanese pear pathotype. AK-toxins are esters of 9,10-epoxy 8-hydroxy 9-methyldecatrienoic acid (EDA). On cellular level, AK-toxins affect plasma membrane of susceptible cells and cause a sudden increase in loss of K(+) after a few minutes of toxin treatment. The acyl-CoA ligase AKT1, the hydrolase AKT2 and enoyl-CoA hydratase AKT3 are all involved in the biosynthesis of the AK-, AF- and ACT-toxin common 9,10-epoxy-8-hydroxy-9-methyl-decatrienoic acid (EDA) structural moiety. Part of the EDA biosynthesis occurs in the peroxisome since these 3 enzymes are localized in peroxisomes. The exact roles of the 3 enzymes, as well as of additional AK-toxin clusters enzymes, including AKT4, AKT6 and AKTS1, have still to be elucidated. The Cytochrome P450 monooxygenase AKT7 on the other side functions to limit production of EDA and AK-toxin, probably via the catalysis of a side reaction of EDA or its precursor. The sequence is that of Threonine dehydratase-like protein AKTS1-1 from Alternaria alternata (Alternaria rot fungus).